A 187-amino-acid polypeptide reads, in one-letter code: Phosphatidylethanolamine-binding protein 1 (187 aa).

A phosphoserine mark is found at Ser6 and Ser13. Thr42 bears the Phosphothreonine mark. Ser52, Ser54, Ser98, and Ser153 each carry phosphoserine. The interval 93 to 134 (KGNDISSGTVLSDYVGSGPPKGTGLHRYVWLVYEQARPLKCD) is interaction with RAF1.

This sequence belongs to the phosphatidylethanolamine-binding protein family. Has a tendency to form dimers by disulfide cross-linking. Interacts with RAF1 and this interaction is enhanced if RAF1 is phosphorylated on residues 'Ser-338', 'Ser-339', 'Tyr-340' and 'Tyr-341'. Interacts with ALOX15; in response to IL13/interleukin-13, prevents the interaction of PEBP1 with RAF1 to activate the ERK signaling cascade.

It localises to the cytoplasm. Functionally, binds ATP, opioids and phosphatidylethanolamine. Has lower affinity for phosphatidylinositol and phosphatidylcholine. Serine protease inhibitor which inhibits thrombin, neuropsin and chymotrypsin but not trypsin, tissue type plasminogen activator and elastase. Inhibits the kinase activity of RAF1 by inhibiting its activation and by dissociating the RAF1/MEK complex and acting as a competitive inhibitor of MEK phosphorylation. HCNP may be involved in the function of the presynaptic cholinergic neurons of the central nervous system. HCNP increases the production of choline acetyltransferase but not acetylcholinesterase. Seems to be mediated by a specific receptor. The chain is Phosphatidylethanolamine-binding protein 1 (PEBP1) from Macaca fascicularis (Crab-eating macaque).